Here is a 248-residue protein sequence, read N- to C-terminus: Aquaporin TIP2-3 (248 aa).

Helical transmembrane passes span 20–40 (AYVA…GSAI) and 54–74 (AGLV…VSMA). The short motif at 83–85 (NPA) is the NPA 1 element. The next 3 helical transmembrane spans lie at 97–119 (TILT…CFLL), 141–161 (GVVM…ATAA), and 168–188 (LGTI…LAAG). The NPA 2 motif lies at 196–198 (NPA). Residues 217–237 (WVGPLVGGGLAGLVYGDVFIA) form a helical membrane-spanning segment.

It belongs to the MIP/aquaporin (TC 1.A.8) family. TIP (TC 1.A.8.10) subfamily. In terms of tissue distribution, specifically expressed in roots.

Its subcellular location is the cell membrane. In terms of biological role, water channel required to facilitate the transport of water across cell membrane. The polypeptide is Aquaporin TIP2-3 (TIP2-3) (Zea mays (Maize)).